Reading from the N-terminus, the 316-residue chain is Biotin synthase (316 aa).

Residues 36–264 form the Radical SAM core domain; sequence TEIQISTLLS…ASRVRLAAGR (229 aa). Positions 51, 55, and 58 each coordinate [4Fe-4S] cluster. Residues Cys96, Cys127, Cys187, and Arg259 each coordinate [2Fe-2S] cluster.

This sequence belongs to the radical SAM superfamily. Biotin synthase family. In terms of assembly, homodimer. The cofactor is [4Fe-4S] cluster. Requires [2Fe-2S] cluster as cofactor.

The enzyme catalyses (4R,5S)-dethiobiotin + (sulfur carrier)-SH + 2 reduced [2Fe-2S]-[ferredoxin] + 2 S-adenosyl-L-methionine = (sulfur carrier)-H + biotin + 2 5'-deoxyadenosine + 2 L-methionine + 2 oxidized [2Fe-2S]-[ferredoxin]. The protein operates within cofactor biosynthesis; biotin biosynthesis; biotin from 7,8-diaminononanoate: step 2/2. Functionally, catalyzes the conversion of dethiobiotin (DTB) to biotin by the insertion of a sulfur atom into dethiobiotin via a radical-based mechanism. The chain is Biotin synthase from Gluconacetobacter diazotrophicus (strain ATCC 49037 / DSM 5601 / CCUG 37298 / CIP 103539 / LMG 7603 / PAl5).